A 95-amino-acid polypeptide reads, in one-letter code: Histone-like DNA-binding protein (95 aa).

Belongs to the bacterial histone-like protein family.

This is Histone-like DNA-binding protein from Rickettsia conorii (strain ATCC VR-613 / Malish 7).